Consider the following 153-residue polypeptide: Vasotocin-neurophysin VT 1 (153 aa).

A signal peptide spans 1–20 (MPYSTFPLLWVLGLLALSSA). A disulfide bridge connects residues C21 and C26. The residue at position 29 (G29) is a Glycine amide. 7 disulfides stabilise this stretch: C41/C85, C44/C58, C52/C75, C59/C65, C92/C104, C98/C116, and C105/C110.

It belongs to the vasopressin/oxytocin family. In terms of processing, seven disulfide bonds are present in neurophysin.

It localises to the secreted. Functionally, vasotocin is an antidiuretic hormone. The protein is Vasotocin-neurophysin VT 1 of Oncorhynchus keta (Chum salmon).